Reading from the N-terminus, the 212-residue chain is Pyridoxine/pyridoxamine 5'-phosphate oxidase (212 aa).

Residues 61–66 (RTVLLK), 76–77 (FT), Lys-82, Lys-83, and Gln-105 contribute to the FMN site. A substrate-binding site is contributed by Lys-66. Residues Tyr-123, Arg-127, and Ser-131 each contribute to the substrate site. FMN contacts are provided by residues 140 to 141 (QS) and Trp-185. 191–193 (RLH) is a substrate binding site. Arg-195 lines the FMN pocket.

The protein belongs to the pyridoxamine 5'-phosphate oxidase family. As to quaternary structure, homodimer. The cofactor is FMN.

It catalyses the reaction pyridoxamine 5'-phosphate + O2 + H2O = pyridoxal 5'-phosphate + H2O2 + NH4(+). It carries out the reaction pyridoxine 5'-phosphate + O2 = pyridoxal 5'-phosphate + H2O2. It participates in cofactor metabolism; pyridoxal 5'-phosphate salvage; pyridoxal 5'-phosphate from pyridoxamine 5'-phosphate: step 1/1. The protein operates within cofactor metabolism; pyridoxal 5'-phosphate salvage; pyridoxal 5'-phosphate from pyridoxine 5'-phosphate: step 1/1. In terms of biological role, catalyzes the oxidation of either pyridoxine 5'-phosphate (PNP) or pyridoxamine 5'-phosphate (PMP) into pyridoxal 5'-phosphate (PLP). The polypeptide is Pyridoxine/pyridoxamine 5'-phosphate oxidase (Vesicomyosocius okutanii subsp. Calyptogena okutanii (strain HA)).